The following is a 121-amino-acid chain: Flagellar protein FliT (121 aa).

The tract at residues 1–50 (MNHAPHLYFAWQQLVDKSQLMLRLATEEQWDELIASEMAYVNAVQEIAHL) is required for homodimerization. A fliD binding region spans residues 60–98 (MQEQLRPMLRLILDNESKVKQLLQIRMDELAKLVGQSSV).

It belongs to the FliT family. As to quaternary structure, homodimer. Interacts with FliD and FlhC.

It localises to the cytoplasm. The protein localises to the cytosol. Dual-function protein that regulates the transcription of class 2 flagellar operons and that also acts as an export chaperone for the filament-capping protein FliD. As a transcriptional regulator, acts as an anti-FlhDC factor; it directly binds FlhC, thus inhibiting the binding of the FlhC/FlhD complex to class 2 promoters, resulting in decreased expression of class 2 flagellar operons. As a chaperone, effects FliD transition to the membrane by preventing its premature polymerization, and by directing it to the export apparatus. The protein is Flagellar protein FliT of Shigella sonnei (strain Ss046).